A 197-amino-acid chain; its full sequence is Pyridoxal 5'-phosphate synthase subunit PdxT (197 aa).

52 to 54 (GES) lines the L-glutamine pocket. The Nucleophile role is filled by Cys84. L-glutamine-binding positions include Arg116 and 143 to 144 (IR). Residues His179 and Glu181 each act as charge relay system in the active site.

It belongs to the glutaminase PdxT/SNO family. In terms of assembly, in the presence of PdxS, forms a dodecamer of heterodimers. Only shows activity in the heterodimer.

The catalysed reaction is aldehydo-D-ribose 5-phosphate + D-glyceraldehyde 3-phosphate + L-glutamine = pyridoxal 5'-phosphate + L-glutamate + phosphate + 3 H2O + H(+). It carries out the reaction L-glutamine + H2O = L-glutamate + NH4(+). Its pathway is cofactor biosynthesis; pyridoxal 5'-phosphate biosynthesis. Functionally, catalyzes the hydrolysis of glutamine to glutamate and ammonia as part of the biosynthesis of pyridoxal 5'-phosphate. The resulting ammonia molecule is channeled to the active site of PdxS. This Ignicoccus hospitalis (strain KIN4/I / DSM 18386 / JCM 14125) protein is Pyridoxal 5'-phosphate synthase subunit PdxT.